The sequence spans 129 residues: Cytochrome c oxidase subunit 5B, mitochondrial (129 aa).

The N-terminal 31 residues, 1-31, are a transit peptide targeting the mitochondrion; it reads MASRLLRGVGALAAQALRAHGPRGVAATRSM. Residues Lys68 and Lys86 each carry the N6-acetyllysine modification. Residues Cys91, Cys93, Cys113, and Cys116 each coordinate Zn(2+). Lys121 is subject to N6-acetyllysine.

The protein belongs to the cytochrome c oxidase subunit 5B family. As to quaternary structure, component of the cytochrome c oxidase (complex IV, CIV), a multisubunit enzyme composed of 14 subunits. The complex is composed of a catalytic core of 3 subunits MT-CO1, MT-CO2 and MT-CO3, encoded in the mitochondrial DNA, and 11 supernumerary subunits COX4I, COX5A, COX5B, COX6A, COX6B, COX6C, COX7A, COX7B, COX7C, COX8 and NDUFA4, which are encoded in the nuclear genome. The complex exists as a monomer or a dimer and forms supercomplexes (SCs) in the inner mitochondrial membrane with NADH-ubiquinone oxidoreductase (complex I, CI) and ubiquinol-cytochrome c oxidoreductase (cytochrome b-c1 complex, complex III, CIII), resulting in different assemblies (supercomplex SCI(1)III(2)IV(1) and megacomplex MCI(2)III(2)IV(2)).

It is found in the mitochondrion inner membrane. It participates in energy metabolism; oxidative phosphorylation. Functionally, component of the cytochrome c oxidase, the last enzyme in the mitochondrial electron transport chain which drives oxidative phosphorylation. The respiratory chain contains 3 multisubunit complexes succinate dehydrogenase (complex II, CII), ubiquinol-cytochrome c oxidoreductase (cytochrome b-c1 complex, complex III, CIII) and cytochrome c oxidase (complex IV, CIV), that cooperate to transfer electrons derived from NADH and succinate to molecular oxygen, creating an electrochemical gradient over the inner membrane that drives transmembrane transport and the ATP synthase. Cytochrome c oxidase is the component of the respiratory chain that catalyzes the reduction of oxygen to water. Electrons originating from reduced cytochrome c in the intermembrane space (IMS) are transferred via the dinuclear copper A center (CU(A)) of subunit 2 and heme A of subunit 1 to the active site in subunit 1, a binuclear center (BNC) formed by heme A3 and copper B (CU(B)). The BNC reduces molecular oxygen to 2 water molecules using 4 electrons from cytochrome c in the IMS and 4 protons from the mitochondrial matrix. The polypeptide is Cytochrome c oxidase subunit 5B, mitochondrial (Cox5b) (Rattus norvegicus (Rat)).